A 346-amino-acid polypeptide reads, in one-letter code: Putative agmatine deiminase (346 aa).

Cys-333 (amidino-cysteine intermediate) is an active-site residue.

Belongs to the agmatine deiminase family.

It carries out the reaction agmatine + H2O = N-carbamoylputrescine + NH4(+). In Legionella pneumophila (strain Paris), this protein is Putative agmatine deiminase.